Consider the following 276-residue polypeptide: Borealin (276 aa).

A disordered region spans residues 111–158 (KEAKSSANSEDENMAPLKSTMKKKKASKKAPSTSKKPRTLSISKQGGT).

The protein belongs to the borealin family. As to quaternary structure, component of the CPC complex.

It localises to the nucleus. The protein resides in the chromosome. It is found in the centromere. Its subcellular location is the cytoplasm. The protein localises to the cytoskeleton. It localises to the spindle. Functionally, component of the chromosomal passenger complex (CPC), a complex that acts as a key regulator of mitosis. The CPC complex has essential functions at the centromere in ensuring correct chromosome alignment and segregation and is required for chromatin-induced microtubule stabilization and spindle assembly. In Danio rerio (Zebrafish), this protein is Borealin (cdca8).